Reading from the N-terminus, the 326-residue chain is Nicotianamine synthase 2 (326 aa).

Belongs to the nicotianamine synthase (NAS)-like family. In terms of tissue distribution, expressed in roots.

It catalyses the reaction 3 S-adenosyl-L-methionine = nicotianamine + 3 S-methyl-5'-thioadenosine + 3 H(+). Its function is as follows. Synthesizes nicotianamine, a polyamine that is the first intermediate in the synthesis of the phytosiderophores of the mugineic acid type found in gramineae which serve as a sensor for the physiological iron status within the plant, and/or might be involved in the transport of iron. The polypeptide is Nicotianamine synthase 2 (NAS2) (Oryza sativa subsp. japonica (Rice)).